The primary structure comprises 310 residues: Olfactory receptor 8I2 (310 aa).

Residues 1–25 lie on the Extracellular side of the membrane; sequence MAGNNFTEVTVFILSGFANHPELQV. N-linked (GlcNAc...) asparagine glycosylation occurs at Asn5. The helical transmembrane segment at 26-46 threads the bilayer; that stretch reads SLFLMFLFIYLFTVLGNLGLI. The Cytoplasmic segment spans residues 47-54; sequence TLIRMDSQ. A helical membrane pass occupies residues 55–75; that stretch reads LHTPMYFFLSNLAFIDIFYSS. Topologically, residues 76–99 are extracellular; it reads TVTPKALVNFQSNRRSISFVGCFV. A disulfide bridge connects residues Cys97 and Cys188. Residues 100 to 120 form a helical membrane-spanning segment; sequence QMYFFVGLVCCECFLLGSMAY. Residues 121-139 lie on the Cytoplasmic side of the membrane; the sequence is NRYIAICNPLLYSVVMSQK. A helical membrane pass occupies residues 140–160; that stretch reads VSNWLGVMPYVIGFTSSLISV. Residues 161-196 lie on the Extracellular side of the membrane; the sequence is WVISSLAFCDSSINHFFCDTTALLALSCVDTFGTEM. A helical transmembrane segment spans residues 197 to 216; the sequence is VSFVLAGFTLLSSLLIITVT. At 217 to 236 the chain is on the cytoplasmic side; it reads YIIIISAILRIQSAAGRQKA. Residues 237 to 257 traverse the membrane as a helical segment; it reads FSTCASHLMAVTIFYGSLIFT. At 258–270 the chain is on the extracellular side; the sequence is YLQPDNTSSLTQA. The chain crosses the membrane as a helical span at residues 271 to 291; sequence QVASVFYTIVIPMLNPLIYSL. Residues 292–310 are Cytoplasmic-facing; the sequence is RNKDVKNALLRVIHRKLFP.

Belongs to the G-protein coupled receptor 1 family.

It localises to the cell membrane. Functionally, odorant receptor. This chain is Olfactory receptor 8I2 (OR8I2), found in Homo sapiens (Human).